Consider the following 135-residue polypeptide: Large ribosomal subunit protein uL16c (135 aa).

It belongs to the universal ribosomal protein uL16 family. Part of the 50S ribosomal subunit.

It localises to the plastid. Its subcellular location is the chloroplast. The chain is Large ribosomal subunit protein uL16c from Drimys granadensis.